The chain runs to 192 residues: Peptidyl-tRNA hydrolase (192 aa).

Residue tyrosine 17 participates in tRNA binding. The active-site Proton acceptor is histidine 22. TRNA is bound by residues phenylalanine 67, asparagine 69, and asparagine 115.

The protein belongs to the PTH family. Monomer.

It is found in the cytoplasm. The catalysed reaction is an N-acyl-L-alpha-aminoacyl-tRNA + H2O = an N-acyl-L-amino acid + a tRNA + H(+). Hydrolyzes ribosome-free peptidyl-tRNAs (with 1 or more amino acids incorporated), which drop off the ribosome during protein synthesis, or as a result of ribosome stalling. Functionally, catalyzes the release of premature peptidyl moieties from peptidyl-tRNA molecules trapped in stalled 50S ribosomal subunits, and thus maintains levels of free tRNAs and 50S ribosomes. This is Peptidyl-tRNA hydrolase from Methylobacillus flagellatus (strain ATCC 51484 / DSM 6875 / VKM B-1610 / KT).